The primary structure comprises 141 residues: MLMPKRTKFRKQMKGRNRGYATRGASLSTGEFALKAVEAGRVNSRQIEAARQALTRHVKRQAKIWIRVFPDKPLTKKPLQTRMGKGKAGVEEWVMNIKPGRILFEMAGVSEELAREALTLAMHKLPFKSKFVTRESENEIY.

Positions 1 to 17 (MLMPKRTKFRKQMKGRN) are enriched in basic residues. The segment at 1 to 22 (MLMPKRTKFRKQMKGRNRGYAT) is disordered.

It belongs to the universal ribosomal protein uL16 family. Part of the 50S ribosomal subunit.

In terms of biological role, binds 23S rRNA and is also seen to make contacts with the A and possibly P site tRNAs. The polypeptide is Large ribosomal subunit protein uL16 (Campylobacter curvus (strain 525.92)).